Here is a 140-residue protein sequence, read N- to C-terminus: uncharacterized protein (140 aa).

The segment at 34 to 88 (PLRWRNRARNREKPHSPRAVSSPATHSLPPSNPCRLTPTLSSARPREGSCPSKCS) is disordered.

Expressed in a range of cell lines, including B-cell lymphoma and prostate.

This is an uncharacterized protein from Homo sapiens (Human).